Here is a 235-residue protein sequence, read N- to C-terminus: tRNA (guanine-N(1)-)-methyltransferase (235 aa).

S-adenosyl-L-methionine contacts are provided by residues Gly112 and 132–137 (IGDYVL).

Belongs to the RNA methyltransferase TrmD family. Homodimer.

The protein resides in the cytoplasm. The catalysed reaction is guanosine(37) in tRNA + S-adenosyl-L-methionine = N(1)-methylguanosine(37) in tRNA + S-adenosyl-L-homocysteine + H(+). Functionally, specifically methylates guanosine-37 in various tRNAs. The polypeptide is tRNA (guanine-N(1)-)-methyltransferase (Cytophaga hutchinsonii (strain ATCC 33406 / DSM 1761 / CIP 103989 / NBRC 15051 / NCIMB 9469 / D465)).